The following is a 231-amino-acid chain: tRNA (guanine-N(7)-)-methyltransferase (231 aa).

4 residues coordinate S-adenosyl-L-methionine: E62, E87, D114, and D137. The active site involves D137. Residues K141, D173, and T210–E213 contribute to the substrate site.

The protein belongs to the class I-like SAM-binding methyltransferase superfamily. TrmB family.

It catalyses the reaction guanosine(46) in tRNA + S-adenosyl-L-methionine = N(7)-methylguanosine(46) in tRNA + S-adenosyl-L-homocysteine. The protein operates within tRNA modification; N(7)-methylguanine-tRNA biosynthesis. Functionally, catalyzes the formation of N(7)-methylguanine at position 46 (m7G46) in tRNA. This chain is tRNA (guanine-N(7)-)-methyltransferase, found in Methylococcus capsulatus (strain ATCC 33009 / NCIMB 11132 / Bath).